A 314-amino-acid chain; its full sequence is MEITFLGTSSGVPTRSRNVSSVALRLPQRAEVWLFDCGEGTQHQLLRSDVKISQITRIFITHMHGDHIYGLMGLLASCGLAGNAQDIEIYGPPDLIDYLKACAKYSQVKLSHRVRVYGVRPGILYEDEEFTVSCGLLKHRIPAFGYRIAEKNRPGRFDVEKATALGIPPGPIYGQLKRGEVVTLPDGRRINGKDLCGETETGRKVIYCTDTVFCDGAVELAQDGDVLIHEATFAHQDAQLAFDRLHSTSTMAAQVALIAGVKQLIMTHFSPRYAPGNVLQLDDLLAEAKAIFANTILARDFMTYEVPRLRRKTE.

Zn(2+) is bound by residues His62, His64, Asp66, His67, His139, Asp210, and His268. Asp66 serves as the catalytic Proton acceptor.

It belongs to the RNase Z family. Homodimer. Zn(2+) is required as a cofactor.

It carries out the reaction Endonucleolytic cleavage of RNA, removing extra 3' nucleotides from tRNA precursor, generating 3' termini of tRNAs. A 3'-hydroxy group is left at the tRNA terminus and a 5'-phosphoryl group is left at the trailer molecule.. Functionally, zinc phosphodiesterase, which displays some tRNA 3'-processing endonuclease activity. Probably involved in tRNA maturation, by removing a 3'-trailer from precursor tRNA. The polypeptide is Ribonuclease Z (Rippkaea orientalis (strain PCC 8801 / RF-1) (Cyanothece sp. (strain PCC 8801))).